Consider the following 138-residue polypeptide: Cytochrome b5 (138 aa).

The 77-residue stretch at 14-90 (GRYYRLEEVQ…SETFIIGELH (77 aa)) folds into the Cytochrome b5 heme-binding domain. The heme site is built by His-49 and His-73. The chain crosses the membrane as a helical span at residues 114 to 136 (SWSNWVIPAIAAIIVALMYRSYM).

The protein belongs to the cytochrome b5 family.

It localises to the endoplasmic reticulum membrane. Its subcellular location is the microsome membrane. Functionally, cytochrome b5 is a membrane-bound hemoprotein functioning as an electron carrier for several membrane-bound oxygenases. The sequence is that of Cytochrome b5 (CYB5A) from Gallus gallus (Chicken).